The following is a 153-amino-acid chain: SsrA-binding protein (153 aa).

It belongs to the SmpB family.

The protein localises to the cytoplasm. In terms of biological role, required for rescue of stalled ribosomes mediated by trans-translation. Binds to transfer-messenger RNA (tmRNA), required for stable association of tmRNA with ribosomes. tmRNA and SmpB together mimic tRNA shape, replacing the anticodon stem-loop with SmpB. tmRNA is encoded by the ssrA gene; the 2 termini fold to resemble tRNA(Ala) and it encodes a 'tag peptide', a short internal open reading frame. During trans-translation Ala-aminoacylated tmRNA acts like a tRNA, entering the A-site of stalled ribosomes, displacing the stalled mRNA. The ribosome then switches to translate the ORF on the tmRNA; the nascent peptide is terminated with the 'tag peptide' encoded by the tmRNA and targeted for degradation. The ribosome is freed to recommence translation, which seems to be the essential function of trans-translation. The protein is SsrA-binding protein of Sulfurovum sp. (strain NBC37-1).